Reading from the N-terminus, the 310-residue chain is Aspartate carbamoyltransferase catalytic subunit (310 aa).

The carbamoyl phosphate site is built by Arg58 and Thr59. L-aspartate is bound at residue Lys86. Residues Arg108, His136, and Gln139 each contribute to the carbamoyl phosphate site. L-aspartate contacts are provided by Arg169 and Arg224. Carbamoyl phosphate contacts are provided by Gly265 and Pro266.

It belongs to the aspartate/ornithine carbamoyltransferase superfamily. ATCase family. As to quaternary structure, heterododecamer (2C3:3R2) of six catalytic PyrB chains organized as two trimers (C3), and six regulatory PyrI chains organized as three dimers (R2).

The catalysed reaction is carbamoyl phosphate + L-aspartate = N-carbamoyl-L-aspartate + phosphate + H(+). The protein operates within pyrimidine metabolism; UMP biosynthesis via de novo pathway; (S)-dihydroorotate from bicarbonate: step 2/3. In terms of biological role, catalyzes the condensation of carbamoyl phosphate and aspartate to form carbamoyl aspartate and inorganic phosphate, the committed step in the de novo pyrimidine nucleotide biosynthesis pathway. The chain is Aspartate carbamoyltransferase catalytic subunit from Geobacter sp. (strain M21).